The sequence spans 349 residues: [LysW]-L-2-aminoadipate/[LysW]-L-glutamate phosphate reductase (349 aa).

Residue 10–13 coordinates NADP(+); it reads SGYT. Cys-150 is a catalytic residue. Residue Asn-316 coordinates NADP(+).

Belongs to the NAGSA dehydrogenase family. Type 1 subfamily. LysY sub-subfamily.

The protein localises to the cytoplasm. The catalysed reaction is [amino-group carrier protein]-C-terminal-N-(1-carboxy-5-oxopentan-1-yl)-L-glutamine + phosphate + NADP(+) = [amino-group carrier protein]-C-terminal-N-(1-carboxy-5-phosphooxy-5-oxopentan-1-yl)-L-glutamine + NADPH + H(+). It catalyses the reaction [amino-group carrier protein]-C-terminal-gamma-(L-glutamyl-5-semialdehyde)-L-glutamate + phosphate + NADP(+) = [amino-group carrier protein]-C-terminal-gamma-(5-phospho-L-glutamyl)-L-glutamate + NADPH + H(+). Its pathway is amino-acid biosynthesis; L-lysine biosynthesis via AAA pathway; L-lysine from L-alpha-aminoadipate (Thermus route): step 3/5. It functions in the pathway amino-acid biosynthesis; L-arginine biosynthesis. Involved in both the arginine and lysine biosynthetic pathways. The chain is [LysW]-L-2-aminoadipate/[LysW]-L-glutamate phosphate reductase from Sulfurisphaera tokodaii (strain DSM 16993 / JCM 10545 / NBRC 100140 / 7) (Sulfolobus tokodaii).